Here is a 122-residue protein sequence, read N- to C-terminus: Large ribosomal subunit protein uL14 (122 aa).

This sequence belongs to the universal ribosomal protein uL14 family. As to quaternary structure, part of the 50S ribosomal subunit. Forms a cluster with proteins L3 and L19. In the 70S ribosome, L14 and L19 interact and together make contacts with the 16S rRNA in bridges B5 and B8.

Its function is as follows. Binds to 23S rRNA. Forms part of two intersubunit bridges in the 70S ribosome. The sequence is that of Large ribosomal subunit protein uL14 from Bradyrhizobium diazoefficiens (strain JCM 10833 / BCRC 13528 / IAM 13628 / NBRC 14792 / USDA 110).